A 429-amino-acid polypeptide reads, in one-letter code: Protein ABERRANT PANICLE ORGANIZATION 1 (429 aa).

Residues 1-11 (MMNPRRLPPLP) show a composition bias toward pro residues. A disordered region spans residues 1–21 (MMNPRRLPPLPSSTSSASAAD). An F-box domain is found at 25 to 71 (PRVWRRLPQPLVDRILACLPTPSFLRLRAACRRFYHLLFSSPFLHSH). 2 helical membrane-spanning segments follow: residues 72–92 (LLLS…GHLL) and 112–132 (VAGG…LAFL). Kelch repeat units follow at residues 229–277 (MAFA…ELGG), 284–339 (RVAL…AEGG), and 350–397 (YVVL…GAAG).

As to quaternary structure, part of a putative SCF (ASK/Cullin/F-box) ubiquitin ligase complex. Interacts with FL/APO2. As to expression, expressed in apical meristems and the lateral organ primordia throughout development. Expressed in seedlings, roots, leaves, shoot apical meristem (SAM), developing panicles, and, at lower levels, in developing seeds.

It localises to the membrane. It participates in protein modification; protein ubiquitination. Functionally, component of SCF(ASK-cullin-F-box) E3 ubiquitin ligase complexes, which may mediate the ubiquitination and subsequent proteasomal degradation of target proteins. Together with FL/APO2, involved in the temporal regulation of meristem identity during both vegetative and reproductive developments in an APO2-dependent manner. Promotes spikelet formation by suppressing the precocious conversion of inflorescence meristems to spikelet meristems, probably via a positive regulation of class-C floral homeotic genes, but not of class-B genes, and through the control of cell proliferation in meristems. Mediates culm development and strength/diameter enhancement at internodes. Required for the regulation of the plastochron, floral organ identity, and floral determinacy. Controls the number of primary rachis branches (PRBs). May trigger the formation of vascular bundle systems which, consequently, promote carbohydrate translocation to panicles. Involved in ozone-induced grain yield regulation. In Oryza sativa subsp. japonica (Rice), this protein is Protein ABERRANT PANICLE ORGANIZATION 1.